The following is a 197-amino-acid chain: dCTP deaminase (197 aa).

DCTP is bound at residue 105-110 (RSSIAR). Glutamate 133 serves as the catalytic Proton donor/acceptor. Positions 166 and 177 each coordinate dCTP. The tract at residues 172 to 197 (NKYAGQKDPKPSRLAEELSLEQLRGR) is disordered. Positions 176–187 (GQKDPKPSRLAE) are enriched in basic and acidic residues.

Belongs to the dCTP deaminase family. Homotrimer.

The enzyme catalyses dCTP + H2O + H(+) = dUTP + NH4(+). It participates in pyrimidine metabolism; dUMP biosynthesis; dUMP from dCTP (dUTP route): step 1/2. Catalyzes the deamination of dCTP to dUTP. This chain is dCTP deaminase, found in Thermomicrobium roseum (strain ATCC 27502 / DSM 5159 / P-2).